Consider the following 183-residue polypeptide: Intermembrane phospholipid transport system binding protein MlaD (183 aa).

At Met1–Glu7 the chain is on the cytoplasmic side. The helical; Signal-anchor for type II membrane protein transmembrane segment at Ile8–Ala28 threads the bilayer. Topologically, residues Ala29–Lys183 are periplasmic. Residues Thr39–Val116 form an MCE/MlaD region. Positions Lys155–Lys183 are disordered. The span at Asn172–Lys183 shows a compositional bias: polar residues.

The protein belongs to the MlaD family. As to quaternary structure, the complex is composed of two ATP-binding proteins (MlaF), two transmembrane proteins (MlaE), two cytoplasmic solute-binding proteins (MlaB) and six periplasmic solute-binding proteins (MlaD).

The protein localises to the cell inner membrane. Its function is as follows. Part of the ABC transporter complex MlaFEDB, which is involved in a phospholipid transport pathway that maintains lipid asymmetry in the outer membrane by retrograde trafficking of phospholipids from the outer membrane to the inner membrane. MlaD functions in substrate binding with strong affinity for phospholipids and modulates ATP hydrolytic activity of the complex. The polypeptide is Intermembrane phospholipid transport system binding protein MlaD (Escherichia coli O157:H7).